A 259-amino-acid chain; its full sequence is 3-deoxy-manno-octulosonate cytidylyltransferase (259 aa).

Belongs to the KdsB family.

The protein resides in the cytoplasm. It carries out the reaction 3-deoxy-alpha-D-manno-oct-2-ulosonate + CTP = CMP-3-deoxy-beta-D-manno-octulosonate + diphosphate. It functions in the pathway nucleotide-sugar biosynthesis; CMP-3-deoxy-D-manno-octulosonate biosynthesis; CMP-3-deoxy-D-manno-octulosonate from 3-deoxy-D-manno-octulosonate and CTP: step 1/1. It participates in bacterial outer membrane biogenesis; lipopolysaccharide biosynthesis. Its function is as follows. Activates KDO (a required 8-carbon sugar) for incorporation into bacterial lipopolysaccharide in Gram-negative bacteria. The protein is 3-deoxy-manno-octulosonate cytidylyltransferase of Maricaulis maris (strain MCS10) (Caulobacter maris).